The sequence spans 348 residues: GTPase Obg 1 (348 aa).

The 159-residue stretch at 1–159 (MSFVDEAKIH…HCVLLKLKIV (159 aa)) folds into the Obg domain. Residues 160 to 329 (SDVGIIGMPN…LHAQVKKAVV (170 aa)) enclose the OBG-type G domain. GTP-binding positions include 166–173 (GMPNAGKS), 191–195 (FTTLE), 212–215 (DIPG), 279–282 (NKCD), and 310–312 (GDE). Ser-173 and Thr-193 together coordinate Mg(2+).

Belongs to the TRAFAC class OBG-HflX-like GTPase superfamily. OBG GTPase family. As to quaternary structure, monomer. The cofactor is Mg(2+).

It is found in the cytoplasm. Functionally, an essential GTPase which binds GTP, GDP and possibly (p)ppGpp with moderate affinity, with high nucleotide exchange rates and a fairly low GTP hydrolysis rate. Plays a role in control of the cell cycle, stress response, ribosome biogenesis and in those bacteria that undergo differentiation, in morphogenesis control. The sequence is that of GTPase Obg 1 from Anaplasma marginale (strain Florida).